We begin with the raw amino-acid sequence, 415 residues long: Probable G-protein coupled receptor 19 (415 aa).

Over 1-69 (MVFAHRMDNS…LKPGEVATAS (69 aa)) the chain is Extracellular. 2 N-linked (GlcNAc...) asparagine glycosylation sites follow: Asn-25 and Asn-52. The helical transmembrane segment at 70-90 (IFFGILWLFSIFGNSLVCLVI) threads the bilayer. The Cytoplasmic segment spans residues 91 to 102 (HRSRRTQSTTNY). The chain crosses the membrane as a helical span at residues 103 to 123 (FVVSMACADLLISVASTPFVL). Residues 124 to 143 (LQFTTGRWTLGSATCKVVRY) lie on the Extracellular side of the membrane. Residues Cys-138 and Cys-210 are joined by a disulfide bond. Residues 144–161 (FQYLTPGVQIYVLLSICI) traverse the membrane as a helical segment. Over 162–182 (DRFYTIVYPLSFKVSREKAKK) the chain is Cytoplasmic. A helical transmembrane segment spans residues 183–203 (MIAASWVFDAGFVTPVLFFYG). Topologically, residues 204–221 (SNWDSHCNYFLPSSWEGT) are extracellular. A helical membrane pass occupies residues 222-242 (AYTVIHFLVGFVIPSVLIILF). At 243-277 (YQKVIKYIWRIGTDGRTVRRTMNIVPRTKVKTIKM) the chain is on the cytoplasmic side. The helical transmembrane segment at 278 to 298 (FLILNLLFLLSWLPFHVAQLW) threads the bilayer. The Extracellular segment spans residues 299–309 (HPHEQDYKKSS). The chain crosses the membrane as a helical span at residues 310–325 (LVFTAITWISFSSSAS). The Cytoplasmic segment spans residues 326–415 (KPTLYSIYNA…INSNPPNTFV (90 aa)).

The protein belongs to the G-protein coupled receptor 1 family. In terms of tissue distribution, abundant expression in the brain.

The protein resides in the cell membrane. G-protein coupled receptor that plays a role in the regulation of circadian rhythms and energy metabolism. Participates in maintaining proper circadian gene expression in the suprachiasmatic nucleus (SCN), the locus of the master circadian clock in the brain. May function as a coordinator of aging-associated metabolic dysfunction, stress response, DNA integrity management, and eventual senescence. Upon binding to adropin, modulates mitochondrial energy metabolism via the p44/42-PDK4 signaling pathway, influencing pyruvate dehydrogenase activity. In Homo sapiens (Human), this protein is Probable G-protein coupled receptor 19 (GPR19).